The primary structure comprises 1159 residues: WASH complex subunit 5 (1159 aa).

It belongs to the strumpellin family. Component of the WASH complex.

The protein resides in the early endosome. Its function is as follows. Acts at least in part as component of the WASH complex which seems to regulate washc1 nucleation-promoting factor (NPF) activity and is required for its membrane targeting during endosomal sorting. This Danio rerio (Zebrafish) protein is WASH complex subunit 5.